A 421-amino-acid polypeptide reads, in one-letter code: Imidazolonepropionase (421 aa).

Fe(3+)-binding residues include H81 and H83. The Zn(2+) site is built by H81 and H83. The 4-imidazolone-5-propanoate site is built by R90, Y153, and H186. Residue Y153 coordinates N-formimidoyl-L-glutamate. H251 contacts Fe(3+). Position 251 (H251) interacts with Zn(2+). Position 254 (E254) interacts with 4-imidazolone-5-propanoate. A Fe(3+)-binding site is contributed by D326. D326 is a binding site for Zn(2+). Residues N328 and G330 each contribute to the N-formimidoyl-L-glutamate site. S331 contacts 4-imidazolone-5-propanoate.

It belongs to the metallo-dependent hydrolases superfamily. HutI family. Zn(2+) serves as cofactor. The cofactor is Fe(3+).

Its subcellular location is the cytoplasm. The catalysed reaction is 4-imidazolone-5-propanoate + H2O = N-formimidoyl-L-glutamate. It participates in amino-acid degradation; L-histidine degradation into L-glutamate; N-formimidoyl-L-glutamate from L-histidine: step 3/3. Catalyzes the hydrolytic cleavage of the carbon-nitrogen bond in imidazolone-5-propanoate to yield N-formimidoyl-L-glutamate. It is the third step in the universal histidine degradation pathway. The sequence is that of Imidazolonepropionase from Streptococcus sanguinis (strain SK36).